The sequence spans 170 residues: Helix-loop-helix protein 3 (170 aa).

A compositionally biased stretch (low complexity) spans 1-26; sequence MTASTSSTPSTSTKIPSSSKSSVTKQ. Disordered stretches follow at residues 1–42 and 118–170; these read MTAS…VDQV and TPSP…TETY. Residues 26–39 form a basic motif; degenerate region; that stretch reads QTKQKRNERERKRV. The region spanning 26 to 79 is the bHLH domain; the sequence is QTKQKRNERERKRVDQVNQGFVLLQERVPKAAGNKAKLSKVETLREAARYIQEL. Over residues 30–40 the composition is skewed to basic and acidic residues; sequence KRNERERKRVD. The tract at residues 40–79 is helix-loop-helix motif; the sequence is DQVNQGFVLLQERVPKAAGNKAKLSKVETLREAARYIQEL. Residues 143 to 157 show a composition bias toward low complexity; sequence SHYYQESSSSSASTS.

As to quaternary structure, efficient DNA binding requires dimerization with another bHLH protein. Forms a heterodimer with hlh-2. In terms of tissue distribution, expressed in the ADL sensory neurons.

Its subcellular location is the nucleus. Probable transcriptional regulator. May mediate transcriptional activation by binding to the E-box motif 5'-CANNTG-3'. Plays a role in the differentiation of the hermaphrodite-specific motor neurons (HSN) that are required for normal egg laying. Might play a role in serotonin production by regulating expression of the tryptophan hydrolase tph-1 which catalyzes serotonin synthesis, in the HSN neurons. Also plays a role in HSN axon guidance towards the vulva and the ventral nerve cord, possibly by promoting the expression of the netrin receptor unc-40. Under feeding conditions, involved in the regulation of the srh-234 chemoreceptor encoding gene expression in the ADL sensory neurons. Together with hlh-2, involved in the induction of programmed cell death in the sister cells of the serotonergic neurosecretory motor (NSM) neurons, probably through the activation of egl-1 transcription. The chain is Helix-loop-helix protein 3 from Caenorhabditis elegans.